Consider the following 390-residue polypeptide: Malonyl-CoA-acyl carrier protein transacylase, mitochondrial (390 aa).

A mitochondrion-targeting transit peptide spans 1–21; that stretch reads MSVRVARVAWVRGLGASYRRG. Active-site residues include Ser153 and His270. Lys314 carries the N6-succinyllysine modification.

Belongs to the type II malonyltransferase family.

The protein localises to the mitochondrion. It catalyses the reaction holo-[ACP] + malonyl-CoA = malonyl-[ACP] + CoA. It participates in lipid metabolism; fatty acid biosynthesis. Functionally, catalyzes the transfer of a malonyl moiety from malonyl-CoA to the free thiol group of the phosphopantetheine arm of the mitochondrial ACP protein (NDUFAB1). This suggests the existence of the biosynthesis of fatty acids in mitochondria. Also acts as a mitochondrial small ribosomal subunit (mt-SSU) assembly factor. This chain is Malonyl-CoA-acyl carrier protein transacylase, mitochondrial, found in Homo sapiens (Human).